A 512-amino-acid chain; its full sequence is Kynurenine 3-monooxygenase (512 aa).

Belongs to the aromatic-ring hydroxylase family. KMO subfamily. It depends on FAD as a cofactor.

The protein localises to the mitochondrion outer membrane. It carries out the reaction L-kynurenine + NADPH + O2 + H(+) = 3-hydroxy-L-kynurenine + NADP(+) + H2O. It participates in cofactor biosynthesis; NAD(+) biosynthesis; quinolinate from L-kynurenine: step 1/3. Catalyzes the hydroxylation of L-kynurenine (L-Kyn) to form 3-hydroxy-L-kynurenine (L-3OHKyn). Required for synthesis of quinolinic acid. The chain is Kynurenine 3-monooxygenase (nic-3) from Neurospora crassa (strain ATCC 24698 / 74-OR23-1A / CBS 708.71 / DSM 1257 / FGSC 987).